We begin with the raw amino-acid sequence, 373 residues long: Pectin lyase D (373 aa).

The N-terminal stretch at 1–19 (MKYAAALTAIAALAARAAA) is a signal peptide. 2 cysteine pairs are disulfide-bonded: Cys-82–Cys-101 and Cys-91–Cys-225. Asn-128 carries an N-linked (GlcNAc...) asparagine glycan. Arg-255 is a catalytic residue. N-linked (GlcNAc...) asparagine glycosylation occurs at Asn-274. A disulfide bridge links Cys-321 with Cys-329. Asn-348 is a glycosylation site (N-linked (GlcNAc...) asparagine). Low complexity predominate over residues 354-366 (LPSADAASTSPAS). The interval 354 to 373 (LPSADAASTSPASNAGQGNL) is disordered.

It belongs to the polysaccharide lyase 1 family. In terms of processing, may be O-glycosylated; does not contain N-acetylglucosamine.

Its subcellular location is the secreted. It catalyses the reaction Eliminative cleavage of (1-&gt;4)-alpha-D-galacturonan methyl ester to give oligosaccharides with 4-deoxy-6-O-methyl-alpha-D-galact-4-enuronosyl groups at their non-reducing ends.. In terms of biological role, pectinolytic enzymes consist of four classes of enzymes: pectin lyase, polygalacturonase, pectin methylesterase and rhamnogalacturonase. Among pectinolytic enzymes, pectin lyase is the most important in depolymerization of pectin, since it cleaves internal glycosidic bonds of highly methylated pectins. In Aspergillus niger, this protein is Pectin lyase D (pelD).